We begin with the raw amino-acid sequence, 174 residues long: CASP-like protein 4D2 (174 aa).

Over 1–14 (MAPPPPSPPAVSLK) the chain is Cytoplasmic. A helical transmembrane segment spans residues 15–35 (VLLLLLRVLTGVFLVIALIIL). Topologically, residues 36-60 (STNSVTIVSQGSALKFHFKDVYAYR) are extracellular. Residues 61-81 (YMLSAAVIGLVYAVIQLFFTI) form a helical membrane-spanning segment. Over 82-97 (SEFATGVKNPFNYQLD) the chain is Cytoplasmic. The helical transmembrane segment at 98–118 (FYGDKLISYLVATGSAAGFGV) threads the bilayer. Over 119-150 (TKDLKDTFLALVALDSTDPVDKFFSKGYASAS) the chain is Extracellular. Residues 151–171 (LLLFAFICLAVLSVFSSFAMA) traverse the membrane as a helical segment. Topologically, residues 172 to 174 (KRN) are cytoplasmic.

This sequence belongs to the Casparian strip membrane proteins (CASP) family. As to quaternary structure, homodimer and heterodimers.

The protein resides in the cell membrane. The sequence is that of CASP-like protein 4D2 from Arabidopsis thaliana (Mouse-ear cress).